The chain runs to 502 residues: Glutamate dehydrogenase, mitochondrial (502 aa).

Position 96-98 (96-98 (HHR)) interacts with NAD(+). Positions 102 and 126 each coordinate substrate. An NAD(+)-binding site is contributed by D131. K138 is an active-site residue. S394 is a substrate binding site.

This sequence belongs to the Glu/Leu/Phe/Val dehydrogenases family. Homohexamer.

Its subcellular location is the mitochondrion matrix. The catalysed reaction is L-glutamate + NAD(+) + H2O = 2-oxoglutarate + NH4(+) + NADH + H(+). It catalyses the reaction L-glutamate + NADP(+) + H2O = 2-oxoglutarate + NH4(+) + NADPH + H(+). Its activity is regulated as follows. Subject to allosteric regulation. Activated by AMP and ADP. The polypeptide is Glutamate dehydrogenase, mitochondrial (gluD) (Dictyostelium discoideum (Social amoeba)).